The following is a 193-amino-acid chain: Probable nicotinate-nucleotide adenylyltransferase (193 aa).

The protein belongs to the NadD family.

The catalysed reaction is nicotinate beta-D-ribonucleotide + ATP + H(+) = deamido-NAD(+) + diphosphate. The protein operates within cofactor biosynthesis; NAD(+) biosynthesis; deamido-NAD(+) from nicotinate D-ribonucleotide: step 1/1. Its function is as follows. Catalyzes the reversible adenylation of nicotinate mononucleotide (NaMN) to nicotinic acid adenine dinucleotide (NaAD). This is Probable nicotinate-nucleotide adenylyltransferase from Flavobacterium johnsoniae (strain ATCC 17061 / DSM 2064 / JCM 8514 / BCRC 14874 / CCUG 350202 / NBRC 14942 / NCIMB 11054 / UW101) (Cytophaga johnsonae).